A 1305-amino-acid polypeptide reads, in one-letter code: MADHQARQSGSSQRTVIPDPQLAKEKSNLTNYLRVFAYATRWDFCVYVVGALASIGVGVTMPLMNVVLGQLVGDFSDTVQDPYNMDLNNFKSMLQKQSLYIVGLFLGRWLLNSINKFCFRMIGIRLSSAIRHHYLRSLFAQSIHVIDSMPPGAAATAITATSNTLQIGVSERLGTFVTYVSTIIAAIAVAFTRSWSLTIVSASLLVYIAIIIAIVVPIYLKANAATLKADAQGTAVASEALQGIRLVNACGAHERIISKYSKWVTKAMERSQRVAPIIGAQTGLVFFGIFGVFGLAFWYGTQQFIHGVIKNVGVVIIVLTSVMLILFAFSYLEQPIMAISQAMVAATELFKVIDAPLPPMGSFTPDINSKDLIFKDVTFEYPSRPGARVLDGLSFRIQAGQNTALVGPSGSGKSTIVGLLERWYSLKHSPVLPEAATPRSSKEGERDNHDERKYERSTYEVPIMVPTNLTGALSGSISIGAHDLDDLEGKWWRAQIGLVQQEPFLFNSSIFENVANGLLGTVWENESEAKKRKMVQDACQEAYAHEFICRLPDAYDTRVGDGGAKLSGGQKQRIAIARSIVKRPQIMILDEATSAIDAKSEKIVQAALDRAIKTRTTITIAHRLSTIQKADHIVVLSKGRVVEEGTHKSLMEHENGVYYSLVEAQSLRLSTTDDTDSDLPATTYVAELKSAAVDIEQPLEVQNDEDNGPVVEPEVLRTLTQSFVKLLEGLRDQSSSFLLITIASMGVGAATPLQAWLFAKAVIVFISPSDDLKKEGDFWGFMWLALAGGVGVAYFFQCWISLRLQYHVGATTKQSYLRDMLYQELSFFDDDSRSSGTLIGRIAGDPKQVEGVFGLNLASATSSVFTIVGCLIISLTFGWKLGLVGLCVTVPIMMVSGFWKFRHELQFDQMNAAVFAESSQFASEAIGAMRTVSSLTMESAINNRYKQLLDGHVEAARRKAQWTAVIFGFAESATLGCQALILWYGGRLISSGEYSLEAFMVSYMAIINGVEYAGQILGVAPSAAQAAAAANRILDVQDSNRSSQEAEKSGPTVEDTDGGVEIELCNVSFKYPTRNVSIYKNLDLTIKKGQYAALVGPSGCGKTTIISLLERFYDLEPNHGEILWNGTNINDFGVYQYREHLSLVSQEPILFRGTIRDNILFGVADPSSVPEERIHEVCRDVFIHDVIVSLPDGYNTEVGAMSLSGGQKQRIAIARALIRNPKLLLLDEATSALDSESEKIVQAAFEKARKRRTMIAVAHRLATIQDADIIFVFDQGMVVEKGTHGELLQKRGIYWDMCQTQALDQ.

N-linked (GlcNAc...) asparagine glycosylation occurs at Asn-28. The next 6 helical transmembrane spans lie at 44–64, 99–119, 172–192, 199–219, 277–297, and 312–332; these read FCVY…MPLM, LYIV…KFCF, RLGT…VAFT, IVSA…VPIY, IIGA…GLAF, and VGVV…FSYL. An ABC transmembrane type-1 1 domain is found at 48–348; the sequence is VVGALASIGV…ISQAMVAATE (301 aa). An ABC transporter 1 domain is found at 372–663; the sequence is LIFKDVTFEY…ENGVYYSLVE (292 aa). 407–414 contacts ATP; the sequence is GPSGSGKS. Positions 434–454 are disordered; sequence EAATPRSSKEGERDNHDERKY. Residues 440-454 are compositionally biased toward basic and acidic residues; sequence SSKEGERDNHDERKY. Asn-468, Asn-507, and Asn-525 each carry an N-linked (GlcNAc...) asparagine glycan. Helical transmembrane passes span 737–757, 780–800, 851–873, 877–899, 964–984, and 999–1019; these read FLLI…QAWL, GFMW…QCWI, GVFG…CLII, FGWK…SGFW, AVIF…ILWY, and FMVS…ILGV. Positions 738–1025 constitute an ABC transmembrane type-1 2 domain; sequence LLITIASMGV…ILGVAPSAAQ (288 aa). A disordered region spans residues 1038–1057; that stretch reads DSNRSSQEAEKSGPTVEDTD. Asn-1040, Asn-1066, and Asn-1075 each carry an N-linked (GlcNAc...) asparagine glycan. Residues 1062–1300 enclose the ABC transporter 2 domain; the sequence is IELCNVSFKY…RGIYWDMCQT (239 aa). 1096–1103 is an ATP binding site; sequence GPSGCGKT. Asn-1125 carries N-linked (GlcNAc...) asparagine glycosylation.

It belongs to the ABC transporter superfamily. ABCB family. Multidrug resistance exporter (TC 3.A.1.201) subfamily.

The protein localises to the membrane. In terms of biological role, ABC transporter; part of the gene cluster that mediates the biosynthesis of the lipopeptides W493 A and B. W493 A and B consist of six amino acid residues D-allo-thr, L-Ala, D-Ala, L-Gln, D-Tyr, and L-Val/L-Ile linked to a 3-hydroxy-4-methyltetradecanoic acid polyketide chain. May be involved in excretion or internal transport of W493 A and B. The chain is ABC transporter FPSE_09185 from Fusarium pseudograminearum (strain CS3096) (Wheat and barley crown-rot fungus).